Consider the following 75-residue polypeptide: DNA-directed RNA polymerase subunit omega (75 aa).

It belongs to the RNA polymerase subunit omega family. In cyanobacteria the RNAP catalytic core is composed of 2 alpha, 1 beta, 1 beta', 1 gamma and 1 omega subunit. When a sigma factor is associated with the core the holoenzyme is formed, which can initiate transcription.

It catalyses the reaction RNA(n) + a ribonucleoside 5'-triphosphate = RNA(n+1) + diphosphate. Its function is as follows. Promotes RNA polymerase assembly. Latches the N- and C-terminal regions of the beta' subunit thereby facilitating its interaction with the beta and alpha subunits. This is DNA-directed RNA polymerase subunit omega from Synechococcus sp. (strain WH7803).